The sequence spans 89 residues: Cytochrome c oxidase subunit 7A, mitochondrial (89 aa).

The N-terminal 31 residues, 1 to 31 (MMNLSRAVVRSFATTAGRRSAAVPKDQIEKG), are a transit peptide targeting the mitochondrion. Residues 32–58 (YFEIRKVQEHFQKKDGKPVFLKGSVVD) lie on the Mitochondrial matrix side of the membrane. A helical membrane pass occupies residues 59–81 (NVLYRVTVALALVGIGGMGKLFY). The Mitochondrial intermembrane portion of the chain corresponds to 82-89 (ELSVPKKE).

The protein belongs to the cytochrome c oxidase VIIa family. In terms of assembly, component of the cytochrome c oxidase (complex IV, CIV), a multisubunit enzyme composed of a catalytic core of 3 subunits and several supernumerary subunits. The complex exists as a monomer or a dimer and forms supercomplexes (SCs) in the inner mitochondrial membrane with ubiquinol-cytochrome c oxidoreductase (cytochrome b-c1 complex, complex III, CIII).

Its subcellular location is the mitochondrion inner membrane. The protein operates within energy metabolism; oxidative phosphorylation. Functionally, component of the cytochrome c oxidase, the last enzyme in the mitochondrial electron transport chain which drives oxidative phosphorylation. The respiratory chain contains 3 multisubunit complexes succinate dehydrogenase (complex II, CII), ubiquinol-cytochrome c oxidoreductase (cytochrome b-c1 complex, complex III, CIII) and cytochrome c oxidase (complex IV, CIV), that cooperate to transfer electrons derived from NADH and succinate to molecular oxygen, creating an electrochemical gradient over the inner membrane that drives transmembrane transport and the ATP synthase. Cytochrome c oxidase is the component of the respiratory chain that catalyzes the reduction of oxygen to water. Electrons originating from reduced cytochrome c in the intermembrane space (IMS) are transferred via the dinuclear copper A center (CU(A)) of subunit 2 and heme A of subunit 1 to the active site in subunit 1, a binuclear center (BNC) formed by heme A3 and copper B (CU(B)). The BNC reduces molecular oxygen to 2 water molecules using 4 electrons from cytochrome c in the IMS and 4 protons from the mitochondrial matrix. This Drosophila melanogaster (Fruit fly) protein is Cytochrome c oxidase subunit 7A, mitochondrial.